The primary structure comprises 152 residues: 3-dehydroquinate dehydratase (152 aa).

The active-site Proton acceptor is the Tyr-26. Substrate-binding residues include Asn-77, His-83, and Asp-90. Residue His-103 is the Proton donor of the active site. Residues 104-105 and Arg-114 each bind substrate; that span reads LS.

Belongs to the type-II 3-dehydroquinase family. As to quaternary structure, homododecamer.

The enzyme catalyses 3-dehydroquinate = 3-dehydroshikimate + H2O. The protein operates within metabolic intermediate biosynthesis; chorismate biosynthesis; chorismate from D-erythrose 4-phosphate and phosphoenolpyruvate: step 3/7. Its function is as follows. Catalyzes a trans-dehydration via an enolate intermediate. The polypeptide is 3-dehydroquinate dehydratase (Tolumonas auensis (strain DSM 9187 / NBRC 110442 / TA 4)).